The primary structure comprises 296 residues: Glycine--tRNA ligase alpha subunit (296 aa).

The protein belongs to the class-II aminoacyl-tRNA synthetase family. As to quaternary structure, tetramer of two alpha and two beta subunits.

The protein localises to the cytoplasm. It carries out the reaction tRNA(Gly) + glycine + ATP = glycyl-tRNA(Gly) + AMP + diphosphate. This chain is Glycine--tRNA ligase alpha subunit, found in Listeria welshimeri serovar 6b (strain ATCC 35897 / DSM 20650 / CCUG 15529 / CIP 8149 / NCTC 11857 / SLCC 5334 / V8).